Consider the following 504-residue polypeptide: Xylose import ATP-binding protein XylG (504 aa).

2 ABC transporter domains span residues 6 to 243 (LEMQ…VGRE) and 262 to 504 (VRNF…TGGK). Residue 38-45 (GENGAGKS) coordinates ATP.

Belongs to the ABC transporter superfamily. Xylose importer (TC 3.A.1.2.4) family. In terms of assembly, the complex is composed of two ATP-binding proteins (XylG), two transmembrane proteins (XylH) and a solute-binding protein (XylF).

Its subcellular location is the cell membrane. It catalyses the reaction D-xylose(out) + ATP + H2O = D-xylose(in) + ADP + phosphate + H(+). Functionally, part of the ABC transporter complex XylFGH involved in xylose import. Responsible for energy coupling to the transport system. This chain is Xylose import ATP-binding protein XylG, found in Moorella thermoacetica (strain ATCC 39073 / JCM 9320).